Reading from the N-terminus, the 154-residue chain is Holo-[acyl-carrier-protein] synthase (154 aa).

The Mg(2+) site is built by Asp8 and Glu57.

It belongs to the P-Pant transferase superfamily. AcpS family. Requires Mg(2+) as cofactor.

Its subcellular location is the cytoplasm. It carries out the reaction apo-[ACP] + CoA = holo-[ACP] + adenosine 3',5'-bisphosphate + H(+). Functionally, transfers the 4'-phosphopantetheine moiety from coenzyme A to a Ser of acyl-carrier-protein. The polypeptide is Holo-[acyl-carrier-protein] synthase (Nitrosococcus oceani (strain ATCC 19707 / BCRC 17464 / JCM 30415 / NCIMB 11848 / C-107)).